Reading from the N-terminus, the 277-residue chain is ATP synthase subunit a (277 aa).

Transmembrane regions (helical) follow at residues 40–60, 98–118, 154–174, 219–239, and 245–265; these read AWHV…LIIF, SALI…MNLM, DLNL…FYSI, LFGN…IGYF, and FMWA…FMML.

This sequence belongs to the ATPase A chain family. As to quaternary structure, F-type ATPases have 2 components, CF(1) - the catalytic core - and CF(0) - the membrane proton channel. CF(1) has five subunits: alpha(3), beta(3), gamma(1), delta(1), epsilon(1). CF(0) has three main subunits: a(1), b(2) and c(9-12). The alpha and beta chains form an alternating ring which encloses part of the gamma chain. CF(1) is attached to CF(0) by a central stalk formed by the gamma and epsilon chains, while a peripheral stalk is formed by the delta and b chains.

Its subcellular location is the cell inner membrane. In terms of biological role, key component of the proton channel; it plays a direct role in the translocation of protons across the membrane. In Alteromonas mediterranea (strain DSM 17117 / CIP 110805 / LMG 28347 / Deep ecotype), this protein is ATP synthase subunit a.